A 276-amino-acid chain; its full sequence is Extracellular metalloprotease VDBG_07883 (276 aa).

Residues 1–17 (MQSKFLWIAAASAATAA) form the signal peptide. N-linked (GlcNAc...) asparagine glycans are attached at residues asparagine 70 and asparagine 102. Residue histidine 191 coordinates Zn(2+). Glutamate 192 is an active-site residue. Histidine 195 is a binding site for Zn(2+). Residue asparagine 222 is glycosylated (N-linked (GlcNAc...) asparagine). A disulfide bridge links cysteine 227 with cysteine 254.

The protein belongs to the peptidase M43B family.

It is found in the secreted. Secreted metalloproteinase that allows assimilation of proteinaceous substrates. In Verticillium alfalfae (strain VaMs.102 / ATCC MYA-4576 / FGSC 10136) (Verticillium wilt of alfalfa), this protein is Extracellular metalloprotease VDBG_07883.